The primary structure comprises 217 residues: Probable chemoreceptor glutamine deamidase CheD (217 aa).

A disordered region spans residues 194-217 (ATSGTAPSRGGELFTRASASRTPS).

Belongs to the CheD family.

It catalyses the reaction L-glutaminyl-[protein] + H2O = L-glutamyl-[protein] + NH4(+). Probably deamidates glutamine residues to glutamate on methyl-accepting chemotaxis receptors (MCPs), playing an important role in chemotaxis. This chain is Probable chemoreceptor glutamine deamidase CheD, found in Cupriavidus pinatubonensis (strain JMP 134 / LMG 1197) (Cupriavidus necator (strain JMP 134)).